The chain runs to 121 residues: Large ribosomal subunit protein uL18 (121 aa).

Belongs to the universal ribosomal protein uL18 family. As to quaternary structure, part of the 50S ribosomal subunit; part of the 5S rRNA/L5/L18/L25 subcomplex. Contacts the 5S and 23S rRNAs.

In terms of biological role, this is one of the proteins that bind and probably mediate the attachment of the 5S RNA into the large ribosomal subunit, where it forms part of the central protuberance. The sequence is that of Large ribosomal subunit protein uL18 from Buchnera aphidicola subsp. Baizongia pistaciae (strain Bp).